The sequence spans 893 residues: cGMP-specific 3',5'-cyclic phosphodiesterase (893 aa).

2 consecutive GAF domains span residues 21–173 (DIDV…GIGI) and 205–390 (NLEC…GLGI). Positions 420–743 (GQDQTEKLIQ…RNWQDLAEKV (324 aa)) constitute a PDEase domain. His-496 functions as the Proton donor in the catalytic mechanism. The a divalent metal cation site is built by His-500, His-536, Asp-537, and Asp-647. Disordered stretches follow at residues 784 to 807 (QQSQHGGDDSHTPEHQRSGSRLSI) and 844 to 893 (HVSE…CALL). Basic and acidic residues-rich tracts occupy residues 789 to 800 (GGDDSHTPEHQR) and 844 to 853 (HVSEDMDDKS). Low complexity predominate over residues 864-880 (SVGRMSASSSTSSAGTV). Over residues 883–893 (SKKRSKLCALL) the composition is skewed to basic residues. At Cys-890 the chain carries Cysteine methyl ester. Cys-890 is lipidated: S-farnesyl cysteine. Positions 891–893 (ALL) are cleaved as a propeptide — removed in mature form.

The protein belongs to the cyclic nucleotide phosphodiesterase family. In terms of assembly, interacts with PrBP. A divalent metal cation serves as cofactor.

The protein localises to the cell membrane. It catalyses the reaction 3',5'-cyclic GMP + H2O = GMP + H(+). Its function is as follows. Has a role regulating cGMP transport in Malpighian tubule principal cells. This chain is cGMP-specific 3',5'-cyclic phosphodiesterase, found in Drosophila virilis (Fruit fly).